We begin with the raw amino-acid sequence, 378 residues long: Anhydro-N-acetylmuramic acid kinase (378 aa).

Residue G9–D16 participates in ATP binding.

It belongs to the anhydro-N-acetylmuramic acid kinase family.

It carries out the reaction 1,6-anhydro-N-acetyl-beta-muramate + ATP + H2O = N-acetyl-D-muramate 6-phosphate + ADP + H(+). The protein operates within amino-sugar metabolism; 1,6-anhydro-N-acetylmuramate degradation. It participates in cell wall biogenesis; peptidoglycan recycling. Catalyzes the specific phosphorylation of 1,6-anhydro-N-acetylmuramic acid (anhMurNAc) with the simultaneous cleavage of the 1,6-anhydro ring, generating MurNAc-6-P. Is required for the utilization of anhMurNAc either imported from the medium or derived from its own cell wall murein, and thus plays a role in cell wall recycling. The polypeptide is Anhydro-N-acetylmuramic acid kinase (Synechococcus elongatus (strain ATCC 33912 / PCC 7942 / FACHB-805) (Anacystis nidulans R2)).